A 112-amino-acid polypeptide reads, in one-letter code: Putative pterin-4-alpha-carbinolamine dehydratase (112 aa).

It belongs to the pterin-4-alpha-carbinolamine dehydratase family.

The enzyme catalyses (4aS,6R)-4a-hydroxy-L-erythro-5,6,7,8-tetrahydrobiopterin = (6R)-L-erythro-6,7-dihydrobiopterin + H2O. The polypeptide is Putative pterin-4-alpha-carbinolamine dehydratase (Shewanella pealeana (strain ATCC 700345 / ANG-SQ1)).